We begin with the raw amino-acid sequence, 272 residues long: MHLRLISWLFIILNFMEYIGSQNASRGRRQRRMHPNVSQGCQGGCATCSDYNGCLSCKPRLFFALERIGMKQIGVCLSSCPSGYYGTRYPDINKCTKCKADCDTCFNKNFCTKCKSGFYLHLGKCLDNCPEGLEANNHTMECVSIVHCEVSEWNPWSPCTKKGKTCGFKRGTETRVREIIQHPSAKGNLCPPTNETRKCTVQRKKCQKGERGKKGRERKRKKPNKGESKEAIPDSKSLESSKEIPEQRENKQQQKKRKVQDKQKSVSVSTVH.

Positions 1-21 (MHLRLISWLFIILNFMEYIGS) are cleaved as a signal peptide. FU repeat units follow at residues 35–86 (PNVS…GYYG) and 92–135 (INKC…GLEA). A glycan (N-linked (GlcNAc...) asparagine) is linked at asparagine 36. Disulfide bonds link cysteine 41–cysteine 48, cysteine 45–cysteine 54, cysteine 57–cysteine 76, cysteine 80–cysteine 95, cysteine 98–cysteine 105, cysteine 102–cysteine 111, cysteine 114–cysteine 125, cysteine 129–cysteine 142, cysteine 148–cysteine 190, cysteine 159–cysteine 166, and cysteine 199–cysteine 206. Positions 147–207 (HCEVSEWNPW…KCTVQRKKCQ (61 aa)) constitute a TSP type-1 domain. The segment at 201–272 (VQRKKCQKGE…QKSVSVSTVH (72 aa)) is disordered. The span at 213 to 223 (KKGRERKRKKP) shows a compositional bias: basic residues. The segment covering 224–252 (NKGESKEAIPDSKSLESSKEIPEQRENKQ) has biased composition (basic and acidic residues).

It belongs to the R-spondin family. As to quaternary structure, interacts with the extracellular domain of FZD8 and LRP6. It however does not form a ternary complex with FZD8 and LRP6. Interacts with WNT1. Binds heparin. Interacts with LGR4, LGR5 and LGR6. In terms of tissue distribution, ubiquitously expressed. Expressed at higher level in placenta, small intestine, fetal thymus and lymph node. Highly expressed in endothelial cells.

It localises to the secreted. Activator of the canonical Wnt signaling pathway by acting as a ligand for LGR4-6 receptors, which acts as a key regulator of angiogenesis. Upon binding to LGR4-6 (LGR4, LGR5 or LGR6), LGR4-6 associate with phosphorylated LRP6 and frizzled receptors that are activated by extracellular Wnt receptors, triggering the canonical Wnt signaling pathway to increase expression of target genes. Also regulates the canonical Wnt/beta-catenin-dependent pathway and non-canonical Wnt signaling by acting as an inhibitor of ZNRF3, an important regulator of the Wnt signaling pathway. Acts as a ligand for frizzled FZD8 and LRP6. May negatively regulate the TGF-beta pathway. Acts as a key regulator of angiogenesis by controlling vascular stability and pruning: acts by activating the non-canonical Wnt signaling pathway in endothelial cells. Can also amplify Wnt signaling pathway independently of LGR4-6 receptors, possibly by acting as a direct antagonistic ligand to RNF43 and ZNRF3. In Homo sapiens (Human), this protein is R-spondin-3 (RSPO3).